A 162-amino-acid chain; its full sequence is MNKPLRYAMNVLSVRDYSEVEIRRKCAAYLYKSEGTESEADEAIAQATAEDVEAAIAYCKEHGWLDDARYARRYISSRSRKGYGVQRIRMELSQKGIDKTTLTTALNESDIDWCILAKSVVERKFGHPLSDEWKDKVKHQRYLLYRGFFHEEIQSIYTNFSD.

The protein belongs to the RecX family.

The protein resides in the cytoplasm. In terms of biological role, modulates RecA activity. The sequence is that of Regulatory protein RecX from Pectobacterium atrosepticum (strain SCRI 1043 / ATCC BAA-672) (Erwinia carotovora subsp. atroseptica).